Reading from the N-terminus, the 432-residue chain is Transcriptional adapter 3 (432 aa).

K21 participates in a covalent cross-link: Glycyl lysine isopeptide (Lys-Gly) (interchain with G-Cter in SUMO2). Residues 40–69 (IEELDTLQLELETLLSSASRRLRVLEAETQ) are a coiled coil. Residues 87–126 (GRDHELGAPPKHGKPKKQKLEGKAGHGPGPGPGRPKSKNL) form a disordered region. Residue K129 forms a Glycyl lysine isopeptide (Lys-Gly) (interchain with G-Cter in SUMO2) linkage. A disordered region spans residues 272 to 319 (NIISPMEDSPIPDMSGKESGADGASTSPRNQNKPFSVPHTKSLESRIK). S280 and S298 each carry phosphoserine. The span at 295–305 (ASTSPRNQNKP) shows a compositional bias: polar residues. Residues 367-407 (LLRLAKEEVSRQELRQRVRMADNEVMDAFRKIMAARQKKRT) adopt a coiled-coil conformation. Position 418 is an N6-acetyllysine (K418).

The protein belongs to the NGG1 family. As to quaternary structure, the PCAF complex is composed of a number of TBP-associated factors (TAFS), such as TAF5, TAF5L, TAF6, TAF6L, TAF9, TAF10 and TAF12, PCAF, and also PCAF-associated factors (PAFs), such as TADA2L/ADA2, TADA3L/ADA3 and SPT3. Interacts directly with TADA2L and PCAF and also with the high-risk HPV oncoprotein E6. Component of the STAGA transcription coactivator-HAT complex, at least composed of SUPT3H, GCN5L2, TAF5L, TAF6L, SUPT7L, TADA3L, TAD1L, TAF10, TAF12, TRRAP and TAF9. Component of the TFTC-HAT complex. Component of the ADA2A-containing complex (ATAC), composed of KAT14, KAT2A, TADA2L, TADA3L, ZZ3, MBIP, WDR5, YEATS2, CCDC101 and DR1. In terms of tissue distribution, ubiquitously expressed.

The protein resides in the nucleus. Functionally, functions as a component of the PCAF complex. The PCAF complex is capable of efficiently acetylating histones in a nucleosomal context. The PCAF complex could be considered as the human version of the yeast SAGA complex. Also known as a coactivator for p53/TP53-dependent transcriptional activation. Component of the ATAC complex, a complex with histone acetyltransferase activity on histones H3 and H4. In Homo sapiens (Human), this protein is Transcriptional adapter 3 (TADA3).